A 345-amino-acid chain; its full sequence is Ribosomal RNA small subunit methyltransferase H (345 aa).

S-adenosyl-L-methionine is bound by residues Gly-47–Tyr-49, Asp-65, Phe-92, Asp-113, and Gln-120. A disordered region spans residues Glu-296 to Arg-345.

This sequence belongs to the methyltransferase superfamily. RsmH family.

The protein resides in the cytoplasm. It catalyses the reaction cytidine(1402) in 16S rRNA + S-adenosyl-L-methionine = N(4)-methylcytidine(1402) in 16S rRNA + S-adenosyl-L-homocysteine + H(+). In terms of biological role, specifically methylates the N4 position of cytidine in position 1402 (C1402) of 16S rRNA. This Xanthobacter autotrophicus (strain ATCC BAA-1158 / Py2) protein is Ribosomal RNA small subunit methyltransferase H.